Reading from the N-terminus, the 1041-residue chain is Histone deacetylase complex subunit SAP130-B (1041 aa).

Disordered stretches follow at residues 1–62, 111–131, 572–592, 614–769, and 806–852; these read MSSQ…QEPV, KSTMPSRPIAPAPPSALSAVP, TNQGVQTSSVSSQQASSEPKS, TPAG…PSGA, and VLAN…DEER. Polar residues predominate over residues 18 to 30; that stretch reads VSNSGASVGQNVQ. Basic and acidic residues predominate over residues 33 to 42; the sequence is EVAREIDVQS. The span at 576–592 shows a compositional bias: low complexity; it reads VQTSSVSSQQASSEPKS. The segment covering 614-641 has biased composition (polar residues); that stretch reads TPAGTTVMQSHSQSPGIGSSPAQGSSPR. Residues 707–728 are compositionally biased toward low complexity; sequence PGAADQPSAAASLPSSHHPTAA.

It belongs to the SAP130 family.

It localises to the nucleus. In terms of biological role, acts as a transcriptional repressor. The chain is Histone deacetylase complex subunit SAP130-B (sap130-b) from Xenopus laevis (African clawed frog).